Reading from the N-terminus, the 788-residue chain is MSLTSRSLLATMISLALYGPAMANENNKLSEDVNDELALTSDNADEIELVRGVCIAPQDRSTDPNNDPIKVTADHAEALDKTKVTYTGDVVVQQGNRTIAADQAYLRQPENIVVAEGNVYFHDGTIEVDSERLQSDLDTEDSEMDHAVYNLTCEPGRGEARRITKTHAQGTQFYRMKDGTYTTCPAEDNSWRFSATTLEREGDSPFANLYNARFEVLDVPVFYLPYLRVPVGKERLTGFLYPSVSYGSRDGFEFETPFYWNIAPNYDLTLTPKYMSNRGLQLNTDFRYLTEFGQGSLKGEYLASDKAADNNDSRWAFNYSHNGTYKSNWLFDVDYSKTSDFNYFTDIDSSIGNREDNNLLQTAEVSYREQYWDSTLRVRDFQPLTETGQGSQYRLMPQLEFNYYRPNLPYELDFSMASSISSFANDASNKPDATRVHLEPTLTLPFATPWWSLTSEAKLLYTYYNQDLKSYSRDGIEETVSRTIPTARIHSGLYLERDTSIWGQDYTQSLEPQIQYLYVQDKDQSGIYNPVNDDGGGYDSTRLQQDYYGLFSDKTYSSVDYVAPANQFTVGASTRYFDGNFKERFTLSLGQIFYIDKPTVDDEVESYSATALETEFNYADWLFFKSSMQYDASDKEVQIANGAIEYRENGVYIQPNYRYVSSSYLDKYVTNPNSVNDDGDQDGISQLGLSTGFPLNGGLSVRADYFHDLNVNKMVEGQVGLTYRSACWLIGLTYNKYASSSLGSSNTEYDNNVSLTFSLLGLQGAKPFGASSDTSNAMSYGNSFSLNN.

Positions 1–23 (MSLTSRSLLATMISLALYGPAMA) are cleaved as a signal peptide.

This sequence belongs to the LptD family. As to quaternary structure, component of the lipopolysaccharide transport and assembly complex. Interacts with LptE and LptA.

It localises to the cell outer membrane. Its function is as follows. Together with LptE, is involved in the assembly of lipopolysaccharide (LPS) at the surface of the outer membrane. The protein is LPS-assembly protein LptD of Photobacterium profundum (strain SS9).